The sequence spans 307 residues: 4-hydroxy-3-methylbut-2-enyl diphosphate reductase (307 aa).

A [4Fe-4S] cluster-binding site is contributed by C13. H42 and H75 together coordinate (2E)-4-hydroxy-3-methylbut-2-enyl diphosphate. Dimethylallyl diphosphate contacts are provided by H42 and H75. Isopentenyl diphosphate contacts are provided by H42 and H75. C97 lines the [4Fe-4S] cluster pocket. H125 is a binding site for (2E)-4-hydroxy-3-methylbut-2-enyl diphosphate. H125 contributes to the dimethylallyl diphosphate binding site. Position 125 (H125) interacts with isopentenyl diphosphate. E127 functions as the Proton donor in the catalytic mechanism. A (2E)-4-hydroxy-3-methylbut-2-enyl diphosphate-binding site is contributed by T165. [4Fe-4S] cluster is bound at residue C195. (2E)-4-hydroxy-3-methylbut-2-enyl diphosphate contacts are provided by S223, S224, N225, and S267. Dimethylallyl diphosphate is bound by residues S223, S224, N225, and S267. Residues S223, S224, N225, and S267 each contribute to the isopentenyl diphosphate site.

Belongs to the IspH family. [4Fe-4S] cluster is required as a cofactor.

The catalysed reaction is isopentenyl diphosphate + 2 oxidized [2Fe-2S]-[ferredoxin] + H2O = (2E)-4-hydroxy-3-methylbut-2-enyl diphosphate + 2 reduced [2Fe-2S]-[ferredoxin] + 2 H(+). It carries out the reaction dimethylallyl diphosphate + 2 oxidized [2Fe-2S]-[ferredoxin] + H2O = (2E)-4-hydroxy-3-methylbut-2-enyl diphosphate + 2 reduced [2Fe-2S]-[ferredoxin] + 2 H(+). It functions in the pathway isoprenoid biosynthesis; dimethylallyl diphosphate biosynthesis; dimethylallyl diphosphate from (2E)-4-hydroxy-3-methylbutenyl diphosphate: step 1/1. It participates in isoprenoid biosynthesis; isopentenyl diphosphate biosynthesis via DXP pathway; isopentenyl diphosphate from 1-deoxy-D-xylulose 5-phosphate: step 6/6. In terms of biological role, catalyzes the conversion of 1-hydroxy-2-methyl-2-(E)-butenyl 4-diphosphate (HMBPP) into a mixture of isopentenyl diphosphate (IPP) and dimethylallyl diphosphate (DMAPP). Acts in the terminal step of the DOXP/MEP pathway for isoprenoid precursor biosynthesis. This Chlamydia trachomatis serovar L2 (strain ATCC VR-902B / DSM 19102 / 434/Bu) protein is 4-hydroxy-3-methylbut-2-enyl diphosphate reductase.